Here is a 317-residue protein sequence, read N- to C-terminus: Ricin B-like lectin EULS3 (317 aa).

Positions 1-11 are enriched in basic residues; the sequence is MEHHHQHHRHH. A disordered region spans residues 1 to 157; sequence MEHHHQHHRH…YHKPDENRLP (157 aa). The span at 25 to 36 shows a compositional bias: pro residues; sequence VPPPHVDAPPQP. The span at 136–146 shows a compositional bias: polar residues; sequence HSSNQPQSSSG. A Ricin B-type lectin domain is found at 168–315; it reads TVKVYSKAEP…KGDNQLWKIF (148 aa).

Interacts (via N-terminus) with ATS3A and ATS3B. In terms of tissue distribution, expressed in roots, rosette leaves, stems, cauline leaves and flowers.

The protein localises to the nucleus. It localises to the cytoplasm. Functionally, lectin which binds carbohydrates in vitro. Interacts through its lectin domain with glycan structures containing one or more Lewis X, Lewis Y or lactosamine motifs. May play a role in abiotic stress responses. May play a role in abscisic acid-induced stomatal closure. May play a role in disease resistance against Pseudomonas syringae through its involvement in stomatal movement. In Arabidopsis thaliana (Mouse-ear cress), this protein is Ricin B-like lectin EULS3.